Reading from the N-terminus, the 180-residue chain is Large ribosomal subunit protein uL6 (180 aa).

It belongs to the universal ribosomal protein uL6 family. In terms of assembly, part of the 50S ribosomal subunit.

This protein binds to the 23S rRNA, and is important in its secondary structure. It is located near the subunit interface in the base of the L7/L12 stalk, and near the tRNA binding site of the peptidyltransferase center. The protein is Large ribosomal subunit protein uL6 of Borrelia garinii subsp. bavariensis (strain ATCC BAA-2496 / DSM 23469 / PBi) (Borreliella bavariensis).